The primary structure comprises 785 residues: Endonuclease MutS2 (785 aa).

335 to 342 (GPNTGGKT) lines the ATP pocket. One can recognise a Smr domain in the interval 710-785 (LDLRGERYEE…GLGNTVVELR (76 aa)). The interval 764 to 785 (VKSARDGGANEGGLGNTVVELR) is disordered.

This sequence belongs to the DNA mismatch repair MutS family. MutS2 subfamily. As to quaternary structure, homodimer. Binds to stalled ribosomes, contacting rRNA.

In terms of biological role, endonuclease that is involved in the suppression of homologous recombination and thus may have a key role in the control of bacterial genetic diversity. Its function is as follows. Acts as a ribosome collision sensor, splitting the ribosome into its 2 subunits. Detects stalled/collided 70S ribosomes which it binds and splits by an ATP-hydrolysis driven conformational change. Acts upstream of the ribosome quality control system (RQC), a ribosome-associated complex that mediates the extraction of incompletely synthesized nascent chains from stalled ribosomes and their subsequent degradation. Probably generates substrates for RQC. The protein is Endonuclease MutS2 of Halalkalibacterium halodurans (strain ATCC BAA-125 / DSM 18197 / FERM 7344 / JCM 9153 / C-125) (Bacillus halodurans).